The sequence spans 216 residues: Imidazole glycerol phosphate synthase subunit HisH (216 aa).

The Glutamine amidotransferase type-1 domain occupies 2–216 (RVAIIDYGSG…FIANFLKWKP (215 aa)). Cys-88 (nucleophile) is an active-site residue. Catalysis depends on residues His-196 and Glu-198.

In terms of assembly, heterodimer of HisH and HisF.

The protein localises to the cytoplasm. It carries out the reaction 5-[(5-phospho-1-deoxy-D-ribulos-1-ylimino)methylamino]-1-(5-phospho-beta-D-ribosyl)imidazole-4-carboxamide + L-glutamine = D-erythro-1-(imidazol-4-yl)glycerol 3-phosphate + 5-amino-1-(5-phospho-beta-D-ribosyl)imidazole-4-carboxamide + L-glutamate + H(+). The enzyme catalyses L-glutamine + H2O = L-glutamate + NH4(+). Its pathway is amino-acid biosynthesis; L-histidine biosynthesis; L-histidine from 5-phospho-alpha-D-ribose 1-diphosphate: step 5/9. Its function is as follows. IGPS catalyzes the conversion of PRFAR and glutamine to IGP, AICAR and glutamate. The HisH subunit catalyzes the hydrolysis of glutamine to glutamate and ammonia as part of the synthesis of IGP and AICAR. The resulting ammonia molecule is channeled to the active site of HisF. The protein is Imidazole glycerol phosphate synthase subunit HisH of Brucella melitensis biotype 1 (strain ATCC 23456 / CCUG 17765 / NCTC 10094 / 16M).